The sequence spans 364 residues: Aminomethyltransferase (364 aa).

The protein belongs to the GcvT family. As to quaternary structure, the glycine cleavage system is composed of four proteins: P, T, L and H.

It catalyses the reaction N(6)-[(R)-S(8)-aminomethyldihydrolipoyl]-L-lysyl-[protein] + (6S)-5,6,7,8-tetrahydrofolate = N(6)-[(R)-dihydrolipoyl]-L-lysyl-[protein] + (6R)-5,10-methylene-5,6,7,8-tetrahydrofolate + NH4(+). The glycine cleavage system catalyzes the degradation of glycine. This is Aminomethyltransferase from Shewanella loihica (strain ATCC BAA-1088 / PV-4).